Reading from the N-terminus, the 420-residue chain is Glycogen synthase kinase-3 beta (420 aa).

Residues 1–22 show a composition bias toward polar residues; that stretch reads MSGRPRTTSFAESCKPVQQPSA. Positions 1 to 53 are disordered; the sequence is MSGRPRTTSFAESCKPVQQPSAFGSMKVSRDKDGSKVTTVVATPGQGPDRPQE. S9 is subject to Phosphoserine; by PKB/AKT1, RPS6KA3 and SGK3. Residue C14 is the site of S-palmitoyl cysteine attachment. Residues 56–340 enclose the Protein kinase domain; the sequence is YTDTKVIGNG…PLEACAHSFF (285 aa). ATP is bound by residues 62–70 and K85; that span reads IGNGSFGVV. Catalysis depends on D181, which acts as the Proton acceptor. Phosphotyrosine is present on Y216. The span at 386–401 shows a compositional bias: low complexity; that stretch reads AAASTPTNATAASDAN. The segment at 386-420 is disordered; that stretch reads AAASTPTNATAASDANTGDRGQTNNAASASASNST. S389 is subject to Phosphoserine. T390 and T402 each carry phosphothreonine. The span at 409 to 420 shows a compositional bias: low complexity; sequence NNAASASASNST.

Belongs to the protein kinase superfamily. CMGC Ser/Thr protein kinase family. GSK-3 subfamily. Monomer. Interacts with ARRB2, DISC1 and ZBED3. Interacts with CABYR, MMP2, MUC1, NIN and PRUNE1. Interacts with AXIN1; the interaction mediates hyperphosphorylation of CTNNB1 leading to its ubiquitination and destruction. Interacts with and phosphorylates SNAI1. Interacts with DNM1L (via a C-terminal domain). Found in a complex composed of MACF1, APC, AXIN1, CTNNB1 and GSK3B. Interacts with SGK3. Interacts with DAB2IP (via C2 domain); the interaction stimulates GSK3B kinase activation. Interacts (via C2 domain) with PPP2CA. Interacts with the CLOCK-BMAL1 heterodimer. Interacts with the BMAL1. Interacts with CTNND2. Interacts with NCYM. The complex composed, at least, of APC, CTNNB1 and GSK3B interacts with JPT1; the interaction requires the inactive form of GSK3B (phosphorylated at 'Ser-9'). Forms a complex composed of PRKAR2A or PRKAR2B, GSK3B and GSKIP through GSKIP interaction; facilitates PKA-induced phosphorylation and regulates GSK3B activity. Interacts with GSKIP. Interacts with GID8. Interacts with PIWIL2. Interacts with LMBR1L. Interacts with DDX3X. Interacts with BIRC2. Interacts with TNFRSF10B; TNFRSF10B stimulation inhibits GSK3B kinase activity. Interacts with RICTOR; the interaction results in phosphorylation of RICTOR at 'Thr-1695' by GSK3B which facilitates FBXW7-mediated ubiquitination and subsequent degradation of RICTOR. Found in a complex with SLC39A6, SLC39A10 and with GSK3B that controls NCAM1 phosphorylation. Interacts with PKP3 (via ARM repeats); the interaction may be involved in PKP3 protein degradation. In terms of processing, phosphorylated by AKT1 and ILK1. Upon insulin-mediated signaling, the activated PKB/AKT1 protein kinase phosphorylates and deactivates GSK3B, resulting in the dephosphorylation and activation of GYS1. Activated by phosphorylation at Tyr-216. Inactivated by phosphorylation at Ser-9. Phosphorylated in a circadian manner in the hippocampus. Mono-ADP-ribosylation by PARP10 negatively regulates kinase activity. Post-translationally, palmitoylated. Palmitoylation by ZDHHC4 prevents AKT1-mediated phosphorylation. As to expression, expressed in testis, thymus, prostate and ovary and weakly expressed in lung, brain and kidney. Colocalizes with EIF2AK2/PKR and TAU in the Alzheimer disease (AD) brain.

The protein resides in the cytoplasm. It localises to the nucleus. The protein localises to the cell membrane. It carries out the reaction L-seryl-[tau protein] + ATP = O-phospho-L-seryl-[tau protein] + ADP + H(+). The catalysed reaction is L-threonyl-[tau protein] + ATP = O-phospho-L-threonyl-[tau protein] + ADP + H(+). The enzyme catalyses L-seryl-[protein] + ATP = O-phospho-L-seryl-[protein] + ADP + H(+). It catalyses the reaction L-threonyl-[protein] + ATP = O-phospho-L-threonyl-[protein] + ADP + H(+). Activated by phosphorylation at Tyr-216. In response to insulin, inhibited by phosphorylation at Ser-9 by PKB/AKT1 and RPS6KA3; phosphorylation at this site causes a conformational change, preventing access of substrates to the active site. Inhibited by IL22 treatment which also triggers phosphorylation at Ser-9, promoting inactivation. Inhibited by lithium. In terms of biological role, constitutively active protein kinase that acts as a negative regulator in the hormonal control of glucose homeostasis, Wnt signaling and regulation of transcription factors and microtubules, by phosphorylating and inactivating glycogen synthase (GYS1 or GYS2), EIF2B, CTNNB1/beta-catenin, APC, AXIN1, DPYSL2/CRMP2, JUN, NFATC1/NFATC, MAPT/TAU and MACF1. Requires primed phosphorylation of the majority of its substrates. In skeletal muscle, contributes to insulin regulation of glycogen synthesis by phosphorylating and inhibiting GYS1 activity and hence glycogen synthesis. May also mediate the development of insulin resistance by regulating activation of transcription factors. Regulates protein synthesis by controlling the activity of initiation factor 2B (EIF2BE/EIF2B5) in the same manner as glycogen synthase. In Wnt signaling, GSK3B forms a multimeric complex with APC, AXIN1 and CTNNB1/beta-catenin and phosphorylates the N-terminus of CTNNB1 leading to its degradation mediated by ubiquitin/proteasomes. Phosphorylates JUN at sites proximal to its DNA-binding domain, thereby reducing its affinity for DNA. Phosphorylates NFATC1/NFATC on conserved serine residues promoting NFATC1/NFATC nuclear export, shutting off NFATC1/NFATC gene regulation, and thereby opposing the action of calcineurin. Phosphorylates MAPT/TAU on 'Thr-548', decreasing significantly MAPT/TAU ability to bind and stabilize microtubules. MAPT/TAU is the principal component of neurofibrillary tangles in Alzheimer disease. Plays an important role in ERBB2-dependent stabilization of microtubules at the cell cortex. Phosphorylates MACF1, inhibiting its binding to microtubules which is critical for its role in bulge stem cell migration and skin wound repair. Probably regulates NF-kappa-B (NFKB1) at the transcriptional level and is required for the NF-kappa-B-mediated anti-apoptotic response to TNF-alpha (TNF/TNFA). Negatively regulates replication in pancreatic beta-cells, resulting in apoptosis, loss of beta-cells and diabetes. Through phosphorylation of the anti-apoptotic protein MCL1, may control cell apoptosis in response to growth factors deprivation. Phosphorylates MUC1 in breast cancer cells, decreasing the interaction of MUC1 with CTNNB1/beta-catenin. Is necessary for the establishment of neuronal polarity and axon outgrowth. Phosphorylates MARK2, leading to inhibition of its activity. Phosphorylates SIK1 at 'Thr-182', leading to sustainment of its activity. Phosphorylates ZC3HAV1 which enhances its antiviral activity. Phosphorylates SNAI1, leading to its ubiquitination and proteasomal degradation. Phosphorylates SFPQ at 'Thr-687' upon T-cell activation. Phosphorylates NR1D1 st 'Ser-55' and 'Ser-59' and stabilizes it by protecting it from proteasomal degradation. Regulates the circadian clock via phosphorylation of the major clock components including BMAL1, CLOCK and PER2. Phosphorylates FBXL2 at 'Thr-404' and primes it for ubiquitination by the SCF(FBXO3) complex and proteasomal degradation. Phosphorylates CLOCK AT 'Ser-427' and targets it for proteasomal degradation. Phosphorylates BMAL1 at 'Ser-17' and 'Ser-21' and primes it for ubiquitination and proteasomal degradation. Phosphorylates OGT at 'Ser-3' or 'Ser-4' which positively regulates its activity. Phosphorylates MYCN in neuroblastoma cells which may promote its degradation. Regulates the circadian rhythmicity of hippocampal long-term potentiation and BMAL1 and PER2 expression. Acts as a regulator of autophagy by mediating phosphorylation of KAT5/TIP60 under starvation conditions, activating KAT5/TIP60 acetyltransferase activity and promoting acetylation of key autophagy regulators, such as ULK1 and RUBCNL/Pacer. Negatively regulates extrinsic apoptotic signaling pathway via death domain receptors. Promotes the formation of an anti-apoptotic complex, made of DDX3X, BRIC2 and GSK3B, at death receptors, including TNFRSF10B. The anti-apoptotic function is most effective with weak apoptotic signals and can be overcome by stronger stimulation. Phosphorylates E2F1, promoting the interaction between E2F1 and USP11, stabilizing E2F1 and promoting its activity. Phosphorylates mTORC2 complex component RICTOR at 'Ser-1235' in response to endoplasmic stress, inhibiting mTORC2. Phosphorylates mTORC2 complex component RICTOR at 'Thr-1695' which facilitates FBXW7-mediated ubiquitination and subsequent degradation of RICTOR. Phosphorylates FXR1, promoting FXR1 ubiquitination by the SCF(FBXO4) complex and FXR1 degradation by the proteasome. Phosphorylates interleukin-22 receptor subunit IL22RA1, preventing its proteasomal degradation. The protein is Glycogen synthase kinase-3 beta of Homo sapiens (Human).